Reading from the N-terminus, the 330-residue chain is tRNA U34 carboxymethyltransferase (330 aa).

Carboxy-S-adenosyl-L-methionine-binding positions include K91, W105, K110, G130, 152 to 154 (DPS), 181 to 182 (IE), M196, Y200, and R315.

It belongs to the class I-like SAM-binding methyltransferase superfamily. CmoB family. Homotetramer.

The enzyme catalyses carboxy-S-adenosyl-L-methionine + 5-hydroxyuridine(34) in tRNA = 5-carboxymethoxyuridine(34) in tRNA + S-adenosyl-L-homocysteine + H(+). In terms of biological role, catalyzes carboxymethyl transfer from carboxy-S-adenosyl-L-methionine (Cx-SAM) to 5-hydroxyuridine (ho5U) to form 5-carboxymethoxyuridine (cmo5U) at position 34 in tRNAs. This chain is tRNA U34 carboxymethyltransferase, found in Shewanella loihica (strain ATCC BAA-1088 / PV-4).